A 55-amino-acid chain; its full sequence is Small ribosomal subunit protein bS21 (55 aa).

This sequence belongs to the bacterial ribosomal protein bS21 family.

This chain is Small ribosomal subunit protein bS21, found in Phytoplasma mali (strain AT).